We begin with the raw amino-acid sequence, 244 residues long: Probable transcriptional regulatory protein DMR_30850 (244 aa).

The protein belongs to the TACO1 family.

Its subcellular location is the cytoplasm. The sequence is that of Probable transcriptional regulatory protein DMR_30850 from Solidesulfovibrio magneticus (strain ATCC 700980 / DSM 13731 / RS-1) (Desulfovibrio magneticus).